Here is a 174-residue protein sequence, read N- to C-terminus: Transcription antitermination protein NusB (174 aa).

Belongs to the NusB family.

Functionally, involved in transcription antitermination. Required for transcription of ribosomal RNA (rRNA) genes. Binds specifically to the boxA antiterminator sequence of the ribosomal RNA (rrn) operons. This is Transcription antitermination protein NusB from Rhodopseudomonas palustris (strain TIE-1).